The chain runs to 360 residues: Heme A synthase (360 aa).

Transmembrane regions (helical) follow at residues 13–33 (AVRWWLISVAALIALMVLVGG), 99–119 (LLGRFIGVAYLLPFLFFLWRG), 129–149 (LWLLFALGGLQGAVGWWMVAS), 160–180 (YRLATHLVLALLIFAGIVWTV), and 199–219 (SALLLVVTFVQIYLGALVAGL). Histidine 263 is a binding site for heme. 3 helical membrane passes run 265 to 282 (MTAYALFVLAALHAFDAV), 292 to 312 (GALWLFAAVSLQAVLGILTLL), and 315 to 335 (VPIGLALAHQAVAIAVLTLAV). Histidine 323 is a heme binding site.

It belongs to the COX15/CtaA family. Type 2 subfamily. As to quaternary structure, interacts with CtaB. Heme b serves as cofactor.

The protein localises to the cell membrane. It carries out the reaction Fe(II)-heme o + 2 A + H2O = Fe(II)-heme a + 2 AH2. Its pathway is porphyrin-containing compound metabolism; heme A biosynthesis; heme A from heme O: step 1/1. Functionally, catalyzes the conversion of heme O to heme A by two successive hydroxylations of the methyl group at C8. The first hydroxylation forms heme I, the second hydroxylation results in an unstable dihydroxymethyl group, which spontaneously dehydrates, resulting in the formyl group of heme A. In Bradyrhizobium diazoefficiens (strain JCM 10833 / BCRC 13528 / IAM 13628 / NBRC 14792 / USDA 110), this protein is Heme A synthase.